The sequence spans 181 residues: Probable inosine/xanthosine triphosphatase (181 aa).

Residue D65 coordinates Mg(2+).

The protein belongs to the YjjX NTPase family. Homodimer. Requires Mg(2+) as cofactor. Mn(2+) is required as a cofactor.

It catalyses the reaction XTP + H2O = XDP + phosphate + H(+). The catalysed reaction is ITP + H2O = IDP + phosphate + H(+). Phosphatase that hydrolyzes non-canonical purine nucleotides such as XTP and ITP to their respective diphosphate derivatives. Probably excludes non-canonical purines from DNA/RNA precursor pool, thus preventing their incorporation into DNA/RNA and avoiding chromosomal lesions. The sequence is that of Probable inosine/xanthosine triphosphatase from Caldivirga maquilingensis (strain ATCC 700844 / DSM 13496 / JCM 10307 / IC-167).